The sequence spans 762 residues: Probable inorganic carbon transporter subunit DabA (762 aa).

Residues C279, D281, H461, and C476 each coordinate Zn(2+).

Belongs to the inorganic carbon transporter (TC 9.A.2) DabA family. As to quaternary structure, forms a complex with DabB. The cofactor is Zn(2+).

It localises to the cell inner membrane. Its function is as follows. Part of an energy-coupled inorganic carbon pump. The chain is Probable inorganic carbon transporter subunit DabA from Legionella pneumophila (strain Corby).